The chain runs to 113 residues: MHEMAICMGIIQIVEEKVRERSSSRVRSVCLELGTLSHAAPEAIRFCFAVAAMRTVAEGAALNIVELPGVAWCMSCSKSVEIARRGDCCPCCGSYQLQVTAGEQMRVKALEID.

Residue His-2 coordinates Ni(2+). Residues Cys-73, Cys-76, Cys-89, and Cys-92 each coordinate Zn(2+).

It belongs to the HypA/HybF family.

Functionally, involved in the maturation of [NiFe] hydrogenases. Required for nickel insertion into the metal center of the hydrogenase. The protein is Hydrogenase maturation factor HypA 1 of Bradyrhizobium diazoefficiens (strain JCM 10833 / BCRC 13528 / IAM 13628 / NBRC 14792 / USDA 110).